A 297-amino-acid chain; its full sequence is Protein AKTIP homolog (297 aa).

The tract at residues 13–75 is disordered; it reads FLSDLDEKSS…QRSPSGSSPE (63 aa). Basic and acidic residues predominate over residues 17–42; that stretch reads LDEKSSSSPHDEKKPGDGREVREEKS. Over residues 59–75 the composition is skewed to polar residues; sequence MNLSIARQRSPSGSSPE. In terms of domain architecture, UBC core spans 84-232; that stretch reads FLEYTLMAEY…VNECLRRCHN (149 aa).

It belongs to the ubiquitin-conjugating enzyme family. FTS subfamily.

The polypeptide is Protein AKTIP homolog (Nematostella vectensis (Starlet sea anemone)).